A 160-amino-acid polypeptide reads, in one-letter code: Serine-protein kinase RsbW (160 aa).

It belongs to the anti-sigma-factor family.

It carries out the reaction L-seryl-[protein] + ATP = O-phospho-L-seryl-[protein] + ADP + H(+). The enzyme catalyses L-threonyl-[protein] + ATP = O-phospho-L-threonyl-[protein] + ADP + H(+). Functionally, negative regulator of sigma-B activity. Phosphorylates and inactivates its specific antagonist protein, RsbV. Upon phosphorylation of RsbV, RsbW is released and binds to sigma-B, thereby blocking its ability to form an RNA polymerase holoenzyme (E-sigma-B). The polypeptide is Serine-protein kinase RsbW (Bacillus anthracis (strain A0248)).